The chain runs to 324 residues: Beta-ketoacyl-[acyl-carrier-protein] synthase III (324 aa).

Catalysis depends on residues C112 and H251. The tract at residues 252 to 256 (QANLR) is ACP-binding. The active site involves N281.

It belongs to the thiolase-like superfamily. FabH family. As to quaternary structure, homodimer.

The protein resides in the cytoplasm. The catalysed reaction is malonyl-[ACP] + acetyl-CoA + H(+) = 3-oxobutanoyl-[ACP] + CO2 + CoA. It functions in the pathway lipid metabolism; fatty acid biosynthesis. In terms of biological role, catalyzes the condensation reaction of fatty acid synthesis by the addition to an acyl acceptor of two carbons from malonyl-ACP. Catalyzes the first condensation reaction which initiates fatty acid synthesis and may therefore play a role in governing the total rate of fatty acid production. Possesses both acetoacetyl-ACP synthase and acetyl transacylase activities. Its substrate specificity determines the biosynthesis of branched-chain and/or straight-chain of fatty acids. The polypeptide is Beta-ketoacyl-[acyl-carrier-protein] synthase III (Clostridium perfringens (strain SM101 / Type A)).